The chain runs to 441 residues: Thymidine phosphorylase (441 aa).

The protein belongs to the thymidine/pyrimidine-nucleoside phosphorylase family. In terms of assembly, homodimer.

It catalyses the reaction thymidine + phosphate = 2-deoxy-alpha-D-ribose 1-phosphate + thymine. It functions in the pathway pyrimidine metabolism; dTMP biosynthesis via salvage pathway; dTMP from thymine: step 1/2. Functionally, the enzymes which catalyze the reversible phosphorolysis of pyrimidine nucleosides are involved in the degradation of these compounds and in their utilization as carbon and energy sources, or in the rescue of pyrimidine bases for nucleotide synthesis. The sequence is that of Thymidine phosphorylase from Chromobacterium violaceum (strain ATCC 12472 / DSM 30191 / JCM 1249 / CCUG 213 / NBRC 12614 / NCIMB 9131 / NCTC 9757 / MK).